A 124-amino-acid polypeptide reads, in one-letter code: Sulfur globule protein CV2 (124 aa).

Residues 1–22 (MKKLATAAAVAALLGASASASA) form the signal peptide.

As to quaternary structure, the protein envelope of the sulfur globules is composed of the three different proteins CV1, CV2 and CV3.

Its function is as follows. Structural protein of the sulfur globules, which are intracellular globules that serve for sulfur storage in purple sulfur bacteria. The protein is Sulfur globule protein CV2 (sgpB) of Allochromatium vinosum (strain ATCC 17899 / DSM 180 / NBRC 103801 / NCIMB 10441 / D) (Chromatium vinosum).